Reading from the N-terminus, the 718-residue chain is Putative proline-rich receptor-like protein kinase PERK11 (718 aa).

The disordered stretch occupies residues 1 to 256 (MDKVQQQADL…GGTSQQSNES (256 aa)). Over 1 to 262 (MDKVQQQADL…SNESNYTEKT (262 aa)) the chain is Extracellular. Pro residues-rich tracts occupy residues 45-105 (ATSP…PPQS), 115-132 (IPFP…PPPS), and 157-167 (LPSPPSTPFSP). Low complexity-rich tracts occupy residues 168–203 (PSQE…LQPL) and 211–244 (SNRV…ANSN). N-linked (GlcNAc...) asparagine glycans are attached at residues asparagine 231, asparagine 254, and asparagine 257. A helical transmembrane segment spans residues 263-283 (VIGIGIAGVLVILFIAGVFFV). Residues 284–718 (RRKQKKGSSS…RAFNTSHRNH (435 aa)) are Cytoplasmic-facing. Residues 314–348 (HYRQKPGNGNSSAQNSSPDTNSLGNPKHGRGTPDS) form a disordered region. Over residues 320-337 (GNGNSSAQNSSPDTNSLG) the composition is skewed to polar residues. At threonine 359 the chain carries Phosphothreonine. The Protein kinase domain occupies 370 to 649 (FCKSFVVGEG…VRALDTRDDL (280 aa)). ATP contacts are provided by residues 376 to 384 (VGEGGFGCV) and lysine 398. Tyrosine 443 carries the phosphotyrosine modification. The active-site Proton acceptor is the aspartate 494. A phosphoserine mark is found at serine 498 and serine 527. 2 positions are modified to phosphothreonine: threonine 528 and threonine 533. At tyrosine 541 the chain carries Phosphotyrosine. A disordered region spans residues 683–718 (SSDLGTNTGYYPSQDYATSHEYESESRAFNTSHRNH). 2 stretches are compositionally biased toward polar residues: residues 685-699 (DLGT…QDYA) and 709-718 (RAFNTSHRNH).

It belongs to the protein kinase superfamily. Ser/Thr protein kinase family. In terms of tissue distribution, mostly expressed in flower buds.

The protein resides in the cell membrane. The catalysed reaction is L-seryl-[protein] + ATP = O-phospho-L-seryl-[protein] + ADP + H(+). The enzyme catalyses L-threonyl-[protein] + ATP = O-phospho-L-threonyl-[protein] + ADP + H(+). The polypeptide is Putative proline-rich receptor-like protein kinase PERK11 (PERK11) (Arabidopsis thaliana (Mouse-ear cress)).